Reading from the N-terminus, the 634-residue chain is Chaperone protein HtpG (634 aa).

The segment at 1-344 (MNETVANNKE…SNDLPLNVSR (344 aa)) is a; substrate-binding. Positions 345-561 (EILQDNKVTQ…DFEMGTQMAK (217 aa)) are b. The tract at residues 562-634 (LLAAAGQAVP…TAINSLLTKG (73 aa)) is c.

The protein belongs to the heat shock protein 90 family. In terms of assembly, homodimer.

It is found in the cytoplasm. Molecular chaperone. Has ATPase activity. The chain is Chaperone protein HtpG from Vibrio vulnificus (strain YJ016).